A 431-amino-acid chain; its full sequence is Keratin, type I cytoskeletal 20 (431 aa).

Residues 1 to 23 (MDFSRQSFHRSLSSSSQGPALSM) form a disordered region. Residues 1–76 (MDFSRQSFHR…SNGSDLFGGN (76 aa)) form a head region. Ser-13 carries the phosphoserine; by MAPKAPK2, MAPKAPK3 and PKC modification. Phosphoserine is present on residues Ser-16 and Ser-26. Residues 77–112 (GKLAMQNLNDRLANYLEKVRSLEQSNSRLEAQIKQW) form a coil 1A region. The IF rod domain occupies 77–388 (GKLAMQNLND…RLLEGEDIKT (312 aa)). Residues 113 to 130 (YETNAPSTIRDYSSYYAQ) are linker 1. Residues 131 to 222 (IKELQNQVKD…KEHQEEVEVL (92 aa)) form a coil 1B region. The linker 12 stretch occupies residues 223 to 245 (RRQLGNNVNVEVDAAPGLNLGEI). Positions 246-384 (MNEMRQRYEV…ATYRRLLEGE (139 aa)) are coil 2. The interval 385–431 (DIKTTEYQLSTLEMKDIKKTRKIKTVVEEVVDGKVVSSEVKEIEESV) is tail.

Belongs to the intermediate filament family. Heterotetramer of two type I and two type II keratins. Associates with KRT8. Hyperphosphorylation at Ser-13 occurs during the early stages of apoptosis but becomes less prominent during the later stages. Phosphorylation at Ser-13 also increases in response to stress brought on by cell injury. Post-translationally, proteolytically cleaved by caspases during apoptosis. Cleavage occurs at Asp-235. Expressed at low levels in the more differentiated suprabasal regions of the small intestine, and at higher levels in the colon, mainly in the upper region and in scattered cells throughout the remaining epithelium. Also expressed in epithelial cells of bladder, ileum and stomach and at lower levels in pancreas and earskin. The phosphorylated form is nearly exclusively expressed in goblet cells of the small intestine and in the lumen-proximal cells of the colon (at protein level). Also expressed in jejunum and duodenum.

Its function is as follows. Plays a significant role in maintaining keratin filament organization in intestinal epithelia. When phosphorylated, plays a role in the secretion of mucin in the small intestine. This chain is Keratin, type I cytoskeletal 20, found in Mus musculus (Mouse).